A 491-amino-acid polypeptide reads, in one-letter code: Probable CtpA-like serine protease (491 aa).

The segment at 1–22 (MNDHQKNHATSQDDNTKSTPSK) is disordered. Over residues 8 to 22 (HATSQDDNTKSTPSK) the composition is skewed to polar residues. The helical transmembrane segment at 31–51 (LWHFILVILGIILLTSIITVV) threads the bilayer. In terms of domain architecture, PDZ spans 119 to 201 (TKQFNEGVSG…TYVTLTIKRG (83 aa)). Catalysis depends on charge relay system residues Ser324, Asp335, and Lys349.

It belongs to the peptidase S41A family.

The protein resides in the cell membrane. This is Probable CtpA-like serine protease from Staphylococcus epidermidis (strain ATCC 12228 / FDA PCI 1200).